The following is a 427-amino-acid chain: 3-phosphoshikimate 1-carboxyvinyltransferase (427 aa).

Residues K22, S23, and R27 each contribute to the 3-phosphoshikimate site. K22 contacts phosphoenolpyruvate. 2 residues coordinate phosphoenolpyruvate: G96 and R124. 7 residues coordinate 3-phosphoshikimate: S169, S170, Q171, S197, D313, N336, and K340. Residue Q171 coordinates phosphoenolpyruvate. The Proton acceptor role is filled by D313. Positions 344, 386, and 411 each coordinate phosphoenolpyruvate.

This sequence belongs to the EPSP synthase family. As to quaternary structure, monomer.

It is found in the cytoplasm. The enzyme catalyses 3-phosphoshikimate + phosphoenolpyruvate = 5-O-(1-carboxyvinyl)-3-phosphoshikimate + phosphate. The protein operates within metabolic intermediate biosynthesis; chorismate biosynthesis; chorismate from D-erythrose 4-phosphate and phosphoenolpyruvate: step 6/7. In terms of biological role, catalyzes the transfer of the enolpyruvyl moiety of phosphoenolpyruvate (PEP) to the 5-hydroxyl of shikimate-3-phosphate (S3P) to produce enolpyruvyl shikimate-3-phosphate and inorganic phosphate. This Shigella sonnei protein is 3-phosphoshikimate 1-carboxyvinyltransferase.